We begin with the raw amino-acid sequence, 603 residues long: Prosaposin receptor GPR37 (603 aa).

The N-terminal stretch at 1 to 26 (MPAPGAPLSRTSRLLLLLLFKVSVSA) is a signal peptide. Topologically, residues 27–255 (ALSFVPEPRN…QESYGAYAVM (229 aa)) are extracellular. N36 carries N-linked (GlcNAc...) asparagine glycosylation. The interval 39–232 (CLGESCSPLI…GGPRRGNSTN (194 aa)) is disordered. Composition is skewed to basic and acidic residues over residues 51-79 (RSRD…EAEV), 145-158 (TSER…RDEI), and 165-175 (HSVKTEPEPRD). N-linked (GlcNAc...) asparagine glycosylation is found at N212 and N229. A helical transmembrane segment spans residues 256-276 (CLSVVIFGTGIIGNLAVMCIV). The Cytoplasmic segment spans residues 277-289 (CHNYYMRSISNSL). A helical transmembrane segment spans residues 290 to 310 (LANLAFWDFLIIFFCLPLVIF). At 311–325 (HELTKKWLLEDFSCK) the chain is on the extracellular side. C324 and C409 form a disulfide bridge. A helical membrane pass occupies residues 326–346 (IVPYIEVASLGVTTFTLCALC). Residues 347–369 (IDRFRAATNVQMYYEMIENCSST) are Cytoplasmic-facing. The chain crosses the membrane as a helical span at residues 370 to 390 (TAKLAVIWVGALLLALPEVVL). The Extracellular segment spans residues 391–433 (RQLSKEDLGFSGQAPAERCVIKISPDLPDTIYVLALTYDGARL). Residues 434–454 (WWYFGCYFCLPTLFTITCSLV) form a helical membrane-spanning segment. Topologically, residues 455–483 (TARKIRKAEKASTRGNKRQIHLESQMNCT) are cytoplasmic. The helical transmembrane segment at 484-504 (VVALTILYGFCIIPENICNIV) threads the bilayer. Topologically, residues 505–521 (TAYMATGVSQQTMDLLN) are extracellular. Residues 522–542 (IISQFLLFFKSCVTPVLLFCL) form a helical membrane-spanning segment. Residues 543–603 (CRPFSRAFME…STFASVGTHC (61 aa)) lie on the Cytoplasmic side of the membrane.

It belongs to the G-protein coupled receptor 1 family. Forms a complex with PRKN, STUB1 and HSP70. The amount of STUB1 in the complex increases during ER stress. STUB1 promotes the dissociation of HSP70 from PRKN, thus facilitating PRKN-mediated GPR37 ubiquitination. Interacts with PACRG. The N-terminus is cleaved by ADAM10 metalloproteinase; mediating limited proteolysis leading to the release of receptor ectodomain by shedding. In addition, cleaved by FURIN between Arg-53 and Asp-54. In terms of processing, ubiquitinated by PRKN in the presence of UBE2E1 and UBE2L3 in the endoplasmic reticulum. The unfolded form is specifically ubiquitinated by SYVN1, which promotes its proteasomal degradation and prevents neuronal cell death. In terms of tissue distribution, highly expressed in the brain. High levels of expression were seen in fiber tracts such as the corpus callosum, anterior commissure, fornix, internal capsule, cerebral peduncles, and stria terminalis. Additionally, moderate levels of expression were seen in the pyramidal tracts and cerebellar peduncles, as well as in the spinal tract of the trigeminal nerve and the spinal fasciculi.

The protein localises to the cell projection. It is found in the dendrite. Its subcellular location is the synapse. It localises to the cell membrane. The protein resides in the endoplasmic reticulum membrane. In terms of biological role, G-protein-coupled receptor that plays a role in several physiological pathways such as resolution of inflammatory pain and oligodendrocyte differentiation. Acts as a receptor for several ligands including prosaposin, osteocalcin or neuroprotectin D1. Ligand binding induces endocytosis, followed by an ERK phosphorylation cascade. Acts as a receptor for osteocalcin (OCN) to regulate oligodendrocyte differentiation and central nervous system myelination. Mechanistically, plays a negative role in oligodendrocyte differentiation and myelination during development via activation of the ERK1/2 signaling pathway. Therefore, regulates the stability of myelin or resistance of myelin itself to demyelination. Upon activation by neuroprotectin D1 (NPD1), promotes the activation of phagocytosis in macrophages as well as the shift in cytokine release toward an anti-inflammatory profile, and thus helps to reverse inflammatory pain. In addition, the increased macrophage phagocytosis mediates protection against sepsis upon pathogen infection. Additionally, extracellular vesicles derived from efferocyte express prosaposin, which binds to macrophage GPR37 to increase expression of the efferocytosis receptor TIM4 via an ERK-AP1-dependent signaling axis, leading to increased macrophage efferocytosis efficiency and accelerated resolution of inflammation. May also act as a maturation factor of LRP6, protecting LRP6 from the endoplasmic reticulum (ER)-associated protein degradation (ERAD) and thereby promoting the Wnt/beta-catenin signaling pathway. This is Prosaposin receptor GPR37 (Gpr37) from Rattus norvegicus (Rat).